The chain runs to 413 residues: Prophage integrase IntA (413 aa).

The region spanning 105–186 (NTFLLVAERW…RINEVMIYAQ (82 aa)) is the Core-binding (CB) domain. Positions 209–386 (KNMPSIRPDQ…DYLEQRRPMM (178 aa)) constitute a Tyr recombinase domain. Active-site residues include Arg248, Lys275, His337, Arg340, and His363. Tyr373 functions as the O-(3'-phospho-DNA)-tyrosine intermediate in the catalytic mechanism.

The protein belongs to the 'phage' integrase family.

In terms of biological role, integrase is necessary for integration of the phage into the host genome by site-specific recombination. In conjunction with excisionase, integrase is also necessary for excision of the prophage from the host genome. Part of the cryptic P4-like prophage CP4-57, it excises the prophage when overexpressed, which also requires integration host factor (encoded by ihfA and ihfB). Overexpression of AlpA leads to excision of the CP4-57 prophage, which inactivates ssrA (the gene upstream of the prophage) that encodes tmRNA which is required to rescue stalled ribosomes in a process known as trans-translation. The chain is Prophage integrase IntA (intA) from Escherichia coli (strain K12).